Reading from the N-terminus, the 340-residue chain is DNA-directed RNA polymerase subunit alpha (340 aa).

The interval 1–233 is alpha N-terminal domain (alpha-NTD); it reads MIRDEISVST…DLFIPFLRAE (233 aa). An alpha C-terminal domain (alpha-CTD) region spans residues 268 to 340; it reads AFKHIFIDQS…DLPKNKFQIH (73 aa).

Belongs to the RNA polymerase alpha chain family. In plastids the minimal PEP RNA polymerase catalytic core is composed of four subunits: alpha, beta, beta', and beta''. When a (nuclear-encoded) sigma factor is associated with the core the holoenzyme is formed, which can initiate transcription.

It is found in the plastid. The protein localises to the chloroplast. It catalyses the reaction RNA(n) + a ribonucleoside 5'-triphosphate = RNA(n+1) + diphosphate. In terms of biological role, DNA-dependent RNA polymerase catalyzes the transcription of DNA into RNA using the four ribonucleoside triphosphates as substrates. In Cycas taitungensis (Prince sago), this protein is DNA-directed RNA polymerase subunit alpha.